We begin with the raw amino-acid sequence, 472 residues long: Putative ankyrin repeat protein L675 (472 aa).

8 ANK repeats span residues 125–156, 187–216, 265–295, 297–323, 325–351, 352–381, 382–411, and 413–440; these read YKAN…DIHL, DNFK…NETI, YKTK…DKDI, HAML…NIHY, NDQA…GMDS, NNVF…DVNA, NNRS…DIKI, and DTVI…SCDD.

This chain is Putative ankyrin repeat protein L675, found in Acanthamoeba polyphaga (Amoeba).